The chain runs to 64 residues: Large ribosomal subunit protein uL30 (64 aa).

Belongs to the universal ribosomal protein uL30 family. Part of the 50S ribosomal subunit.

This is Large ribosomal subunit protein uL30 from Desulforudis audaxviator (strain MP104C).